A 478-amino-acid chain; its full sequence is Solute carrier family 49 member 4 (478 aa).

The interval 1–27 is disordered; it reads MGSGWSSEEEERQPLLGPGLGPAPGAA. At 1–51 the chain is on the cytoplasmic side; it reads MGSGWSSEEEERQPLLGPGLGPAPGAARRGREATAVLPAAGPNPGRVYGRR. A Di-leucine motif; mediates lysosomal localization motif is present at residues 15 to 16; that stretch reads LL. Residues 52–72 form a helical membrane-spanning segment; it reads WLVLLLFSLLAFAQGLVWNTW. Residues 73–89 are Lumenal-facing; sequence GPIQNSARQAYGFSGWD. The chain crosses the membrane as a helical span at residues 90 to 110; sequence IALLVLWGPIGFLPCFAFMWL. Residues 111 to 117 lie on the Cytoplasmic side of the membrane; the sequence is LDKRGLR. Residues 118–138 form a helical membrane-spanning segment; the sequence is VTVLLTSFLMVLGTGLRCIPV. The Lumenal portion of the chain corresponds to 139–152; the sequence is SDLALKKRLIHGGQ. The chain crosses the membrane as a helical span at residues 153–173; it reads ILNGLAGPTVMNAAPFLSTTW. At 174–184 the chain is on the cytoplasmic side; sequence FSADERATATA. The chain crosses the membrane as a helical span at residues 185–205; the sequence is IASMLSYLGGACAFLVGPLVV. Topologically, residues 206-229 are lumenal; sequence PAPNGTAPLLAAESSRAHIKDRIE. N-linked (GlcNAc...) asparagine glycosylation is present at Asn-209. A helical membrane pass occupies residues 230–250; that stretch reads TVLYAEFGVVCLIFSATLAYF. Residues 251–281 are Cytoplasmic-facing; sequence PPRPPLPPSVAAASQRLSYRRSFCRLLSNLR. Residues 282–302 traverse the membrane as a helical segment; sequence FLMIALAYAIPLGVFAGWSGV. The Lumenal portion of the chain corresponds to 303–314; it reads LDLILTPVHVSQ. The helical transmembrane segment at 315-335 threads the bilayer; it reads VDAGWIGFWSIVGGCVVGIAM. At 336 to 347 the chain is on the cytoplasmic side; sequence ARFADFIRGMLK. A helical membrane pass occupies residues 348 to 368; sequence LILLLLFSGATLSSTWFTLTC. Topologically, residues 369–384 are lumenal; that stretch reads LNSITHLPLTTVTLYA. A helical transmembrane segment spans residues 385–405; the sequence is SCILLGVFLNSSVPIFFELFV. Residues 406 to 414 lie on the Cytoplasmic side of the membrane; it reads ETVYPVPEG. Residues 415–435 traverse the membrane as a helical segment; sequence ITCGVVTFLSNMFMGVLLFFV. Topologically, residues 436 to 442 are lumenal; it reads TFYHTEL. Residues 443 to 463 traverse the membrane as a helical segment; the sequence is SWFNWCLPGSCLLSLLLILCF. The Cytoplasmic portion of the chain corresponds to 464–478; the sequence is RESYDRLYLDVVVSV.

The protein belongs to the major facilitator superfamily. Post-translationally, cleaved in lysosomes by cathepsin L between Leu-214 and Ala-261, generating a N-glycosylated N-terminal and a non-glycosylated C-terminal fragment.

Its subcellular location is the lysosome membrane. The catalysed reaction is pyridoxine(out) + n H(+)(out) = pyridoxine(in) + n H(+)(in). In terms of biological role, mediates H(+)-dependent pyridoxine transport. The polypeptide is Solute carrier family 49 member 4 (Slc49a4) (Mus musculus (Mouse)).